The sequence spans 232 residues: MFPYLTRMNLSIKMGGLTLKESSPNAFLNNTTIARRFKHEYAPRFKIVQKKQKGRVPVRTGGSIKGSTLQFGKYGLRLKSEGIRISAQQLKEADNAIMRYVRPLNNGHLWRRLCTNVAVCIKGNETRMGKGKGGFDHWMVRVPTGKILFEINGDDLHEKVAREAFRKAGTKLPGVYEFVSLDSLVRVGLHSFKNPKDDPVKNFYDENAKKPSKKYLNILKSQEPQYKLFRGR.

A mitochondrion-targeting transit peptide spans 1–41 (MFPYLTRMNLSIKMGGLTLKESSPNAFLNNTTIARRFKHEY).

It belongs to the universal ribosomal protein uL16 family. As to quaternary structure, component of the mitochondrial large ribosomal subunit (mt-LSU). Mature yeast 74S mitochondrial ribosomes consist of a small (37S) and a large (54S) subunit. The 37S small subunit contains a 15S ribosomal RNA (15S mt-rRNA) and 34 different proteins. The 54S large subunit contains a 21S rRNA (21S mt-rRNA) and 46 different proteins.

It is found in the mitochondrion. Functionally, component of the mitochondrial ribosome (mitoribosome), a dedicated translation machinery responsible for the synthesis of mitochondrial genome-encoded proteins, including at least some of the essential transmembrane subunits of the mitochondrial respiratory chain. The mitoribosomes are attached to the mitochondrial inner membrane and translation products are cotranslationally integrated into the membrane. The protein is Large ribosomal subunit protein uL16m (MRPL16) of Saccharomyces cerevisiae (strain ATCC 204508 / S288c) (Baker's yeast).